The chain runs to 286 residues: Eukaryotic translation initiation factor 3 subunit F-2 (286 aa).

The region spanning 11–147 is the MPN domain; sequence ILLQPLVLLH…MRLYTAVVMG (137 aa).

This sequence belongs to the eIF-3 subunit F family. In terms of assembly, component of the eukaryotic translation initiation factor 3 (eIF-3) complex. The eIF-3 complex interacts with pix.

It localises to the cytoplasm. Functionally, component of the eukaryotic translation initiation factor 3 (eIF-3) complex, which is involved in protein synthesis of a specialized repertoire of mRNAs and, together with other initiation factors, stimulates binding of mRNA and methionyl-tRNAi to the 40S ribosome. The eIF-3 complex specifically targets and initiates translation of a subset of mRNAs involved in cell proliferation. The sequence is that of Eukaryotic translation initiation factor 3 subunit F-2 from Drosophila willistoni (Fruit fly).